Here is a 270-residue protein sequence, read N- to C-terminus: Photosystem I chlorophyll a/b-binding protein 6, chloroplastic (270 aa).

The transit peptide at 1 to 33 (MAFAIASALTSTLTLSTSRVQNPTQRRPHVAST) directs the protein to the chloroplast. A disordered region spans residues 16–36 (STSRVQNPTQRRPHVASTSST). The span at 19–36 (RVQNPTQRRPHVASTSST) shows a compositional bias: polar residues. Trp-68 contacts chlorophyll b. Residues Phe-88 and Glu-107 each coordinate chlorophyll a. Arg-112 serves as a coordination point for chlorophyll b. The chain crosses the membrane as a helical span at residues 146-164 (YFADSTTLFVAQMVLMGWA). 2 residues coordinate chlorophyll b: Glu-165 and Arg-168. The chlorophyll a site is built by Lys-221, Glu-222, Asn-225, Arg-227, Gln-239, and His-254. The chain crosses the membrane as a helical span at residues 228–244 (LAMLAFLGFCFQATYTS).

This sequence belongs to the light-harvesting chlorophyll a/b-binding (LHC) protein family. In terms of assembly, the LHC complex consists of chlorophyll a-b binding proteins. Homodimer. Binds pigments. Element of the NAD(P)H dehydrogenase-photosystem I supercomplex (NDH-PSI). The cofactor is Binds at least 14 chlorophylls (8 Chl-a and 6 Chl-b) and carotenoids such as lutein and neoxanthin.. Post-translationally, photoregulated by reversible phosphorylation of its threonine residues.

Its subcellular location is the plastid. The protein resides in the chloroplast thylakoid membrane. Functionally, the light-harvesting complex (LHC) functions as a light receptor, it captures and delivers excitation energy to photosystems with which it is closely associated. Seems involved in the function of the photosystem I in low light conditions, when other LHCA proteins are less abundant. Required, together with LHCA5, for the formation of a full-size NAD(P)H dehydrogenase-photosystem I supercomplex (NDH-PSI) that triggers cyclic and chlororespiratory electron transport in chloroplast thylakoids, especially under stress conditions (e.g. increased light intensity). The polypeptide is Photosystem I chlorophyll a/b-binding protein 6, chloroplastic (Arabidopsis thaliana (Mouse-ear cress)).